Consider the following 159-residue polypeptide: SsrA-binding protein (159 aa).

The protein belongs to the SmpB family.

The protein resides in the cytoplasm. Its function is as follows. Required for rescue of stalled ribosomes mediated by trans-translation. Binds to transfer-messenger RNA (tmRNA), required for stable association of tmRNA with ribosomes. tmRNA and SmpB together mimic tRNA shape, replacing the anticodon stem-loop with SmpB. tmRNA is encoded by the ssrA gene; the 2 termini fold to resemble tRNA(Ala) and it encodes a 'tag peptide', a short internal open reading frame. During trans-translation Ala-aminoacylated tmRNA acts like a tRNA, entering the A-site of stalled ribosomes, displacing the stalled mRNA. The ribosome then switches to translate the ORF on the tmRNA; the nascent peptide is terminated with the 'tag peptide' encoded by the tmRNA and targeted for degradation. The ribosome is freed to recommence translation, which seems to be the essential function of trans-translation. The protein is SsrA-binding protein of Coxiella burnetii (strain RSA 493 / Nine Mile phase I).